Reading from the N-terminus, the 69-residue chain is Alpha-conotoxin-like Tx1 (69 aa).

The first 21 residues, Met1 to Ser21, serve as a signal peptide directing secretion. A propeptide spanning residues Ser22–Pro49 is cleaved from the precursor. Cystine bridges form between Cys51/Cys57 and Cys52/Cys65. A ser-Xaa-Pro motif, crucial for potent interaction with nAChR region spans residues Ser53–Pro55. Position 66 is a glycine amide (Gly66).

Belongs to the conotoxin A superfamily. As to expression, expressed by the venom duct.

It is found in the secreted. Its function is as follows. Alpha-conotoxins act on postsynaptic membranes, they bind to the nicotinic acetylcholine receptors (nAChR) and thus inhibit them. The protein is Alpha-conotoxin-like Tx1 of Conus textile (Cloth-of-gold cone).